The following is a 606-amino-acid chain: Phosphomethylpyrimidine synthase (606 aa).

Residues 1-13 show a composition bias toward polar residues; it reads MTTADARTPASKQ. Disordered regions lie at residues 1–49 and 105–147; these read MTTA…SRPD and AGRP…DGRP. Over residues 14-31 the composition is skewed to low complexity; the sequence is NDGTPDGTTPDAGTPNDG. The segment covering 105–117 has biased composition (basic and acidic residues); sequence AGRPVRPEDDGLK. Substrate is bound by residues asparagine 213, methionine 242, tyrosine 271, histidine 307, 327–329, 368–371, and glutamate 407; these read SRG and DGLR. Histidine 411 is a binding site for Zn(2+). Tyrosine 434 contributes to the substrate binding site. Residue histidine 475 coordinates Zn(2+). [4Fe-4S] cluster is bound by residues cysteine 555, cysteine 558, and cysteine 563.

The protein belongs to the ThiC family. [4Fe-4S] cluster is required as a cofactor.

It carries out the reaction 5-amino-1-(5-phospho-beta-D-ribosyl)imidazole + S-adenosyl-L-methionine = 4-amino-2-methyl-5-(phosphooxymethyl)pyrimidine + CO + 5'-deoxyadenosine + formate + L-methionine + 3 H(+). It participates in cofactor biosynthesis; thiamine diphosphate biosynthesis. Catalyzes the synthesis of the hydroxymethylpyrimidine phosphate (HMP-P) moiety of thiamine from aminoimidazole ribotide (AIR) in a radical S-adenosyl-L-methionine (SAM)-dependent reaction. The chain is Phosphomethylpyrimidine synthase from Streptomyces griseus subsp. griseus (strain JCM 4626 / CBS 651.72 / NBRC 13350 / KCC S-0626 / ISP 5235).